A 212-amino-acid chain; its full sequence is Cytidylate kinase (212 aa).

7 to 15 is a binding site for ATP; sequence GPAASGKGT.

It belongs to the cytidylate kinase family. Type 1 subfamily.

Its subcellular location is the cytoplasm. It carries out the reaction CMP + ATP = CDP + ADP. The enzyme catalyses dCMP + ATP = dCDP + ADP. This Rhodopseudomonas palustris (strain TIE-1) protein is Cytidylate kinase.